Consider the following 471-residue polypeptide: Vitellogenic carboxypeptidase (471 aa).

The signal sequence occupies residues 1 to 19 (MVKFHLLVLIAFTCYTCSD). Asn-135 carries N-linked (GlcNAc...) asparagine glycosylation. Catalysis depends on residues Ser-207, Asp-391, and His-448.

Belongs to the peptidase S10 family. As to expression, synthesized in the fat body of vitellogenic females, secreted into the hemolymph and accumulates in yolk bodies of developing oocytes.

The protein resides in the secreted. Its function is as follows. May play a role in activating hydrolytic enzymes that are involved in the degradation of yolk proteins in developing embryos or may function as an exopeptidase in the degradation of vitellogenin. The chain is Vitellogenic carboxypeptidase (VCP) from Aedes aegypti (Yellowfever mosquito).